A 117-amino-acid polypeptide reads, in one-letter code: Mediator of RNA polymerase II transcription subunit 11 (117 aa).

An N-acetylalanine modification is found at Ala-2.

Belongs to the Mediator complex subunit 11 family. Component of the Mediator complex, which is composed of MED1, MED4, MED6, MED7, MED8, MED9, MED10, MED11, MED12, MED13, MED13L, MED14, MED15, MED16, MED17, MED18, MED19, MED20, MED21, MED22, MED23, MED24, MED25, MED26, MED27, MED29, MED30, MED31, CCNC, CDK8 and CDC2L6/CDK11. The MED12, MED13, CCNC and CDK8 subunits form a distinct module termed the CDK8 module. Mediator containing the CDK8 module is less active than Mediator lacking this module in supporting transcriptional activation. Individual preparations of the Mediator complex lacking one or more distinct subunits have been variously termed ARC, CRSP, DRIP, PC2, SMCC and TRAP. As to expression, expressed in cochlea.

The protein localises to the nucleus. In terms of biological role, component of the Mediator complex, a coactivator involved in the regulated transcription of nearly all RNA polymerase II-dependent genes. Mediator functions as a bridge to convey information from gene-specific regulatory proteins to the basal RNA polymerase II transcription machinery. Mediator is recruited to promoters by direct interactions with regulatory proteins and serves as a scaffold for the assembly of a functional pre-initiation complex with RNA polymerase II and the general transcription factors. This is Mediator of RNA polymerase II transcription subunit 11 (Med11) from Mus musculus (Mouse).